We begin with the raw amino-acid sequence, 176 residues long: Peroxiredoxin AHP1 (176 aa).

Residue serine 2 is modified to N-acetylserine. Residues 9–176 (FPAGDYKFQY…SSVESVLAHL (168 aa)) form the Thioredoxin domain. Serine 28 carries the post-translational modification Phosphoserine. Residue lysine 32 forms a Glycyl lysine isopeptide (Lys-Gly) (interchain with G-Cter in URM1) linkage. Residue lysine 48 forms a Glycyl lysine isopeptide (Lys-Gly) (interchain with G-Cter in ubiquitin); alternate linkage. Residue lysine 48 forms a Glycyl lysine isopeptide (Lys-Gly) (interchain with G-Cter in URM1); alternate linkage. Phosphoserine is present on serine 59. Residue cysteine 62 is the Cysteine sulfenic acid (-SOH) intermediate of the active site. Cysteine 62 is subject to Cysteine persulfide. Lysine 79 participates in a covalent cross-link: Glycyl lysine isopeptide (Lys-Gly) (interchain with G-Cter in URM1). A Glycyl lysine isopeptide (Lys-Gly) (interchain with G-Cter in ubiquitin); alternate cross-link involves residue lysine 81. Lysine 81 participates in a covalent cross-link: Glycyl lysine isopeptide (Lys-Gly) (interchain with G-Cter in URM1); alternate. Residue lysine 107 forms a Glycyl lysine isopeptide (Lys-Gly) (interchain with G-Cter in URM1) linkage. A Glycyl lysine isopeptide (Lys-Gly) (interchain with G-Cter in ubiquitin) cross-link involves residue lysine 113. Residue serine 116 is modified to Phosphoserine. Cysteine 120 carries the cysteine persulfide modification. Residue lysine 124 forms a Glycyl lysine isopeptide (Lys-Gly) (interchain with G-Cter in URM1) linkage. Lysine 156 participates in a covalent cross-link: Glycyl lysine isopeptide (Lys-Gly) (interchain with G-Cter in URM1); alternate. Lysine 156 is covalently cross-linked (Glycyl lysine isopeptide (Lys-Gly) (interchain with G-Cter in SUMO); alternate).

This sequence belongs to the peroxiredoxin family. Prx5 subfamily. In terms of assembly, homodimer; disulfide-linked, upon oxidation. In terms of processing, conjugated to URM1, a ubiquitin-like protein, in response to oxidative stresses. The attachment of URM1 to lysine residues exclusively depends on the presence of a peroxidatic cysteine in the target protein, with low specificity for the particular residue, motif, or structural context at which urmylation can occur. The URM1-conjugation reaction is mechanistically and directly coupled to the process of cysteine persulfidation, transfering the sulfur atom of the URM1 thiocarboxyl group to redox-active cysteine residues in the target protein if it is exposed to oxidative conditions. Persulfidated on specific redox-active cysteine residues. Persulfidation (also called protein S-sulfhydration) may provide a molecular mechanism that enables cells to protect vulnerable cysteine residues from reactive oxygen species (ROS) under stress conditions.

It is found in the cytoplasm. The catalysed reaction is a hydroperoxide + [thioredoxin]-dithiol = an alcohol + [thioredoxin]-disulfide + H2O. Functionally, thiol-specific peroxidase that catalyzes the reduction of hydrogen peroxide and organic hydroperoxides to water and alcohols, respectively. Plays a role in cell protection against oxidative stress by detoxifying peroxides and as sensor of hydrogen peroxide-mediated signaling events. Preferentially eliminates organic peroxides rather than hydrogen peroxide. Relays alkyl hydroperoxides as a signal to the transcription factor CAD1/YAP2 by inducing the formation of intramolecular disulfide bonds in CAD1, which causes its nuclear accumulation and activation. Involved in cellular Mn(2+) homeostasis. The chain is Peroxiredoxin AHP1 from Saccharomyces cerevisiae (strain ATCC 204508 / S288c) (Baker's yeast).